The sequence spans 422 residues: Histidine--tRNA ligase (422 aa).

The protein belongs to the class-II aminoacyl-tRNA synthetase family. Homodimer.

Its subcellular location is the cytoplasm. The enzyme catalyses tRNA(His) + L-histidine + ATP = L-histidyl-tRNA(His) + AMP + diphosphate + H(+). The chain is Histidine--tRNA ligase from Onion yellows phytoplasma (strain OY-M).